A 389-amino-acid chain; its full sequence is S-adenosylmethionine synthase (389 aa).

Histidine 17 lines the ATP pocket. Aspartate 19 contributes to the Mg(2+) binding site. Residue glutamate 45 participates in K(+) binding. Positions 58 and 101 each coordinate L-methionine. Residues 101-111 are flexible loop; the sequence is QSPDISQGVDG. ATP contacts are provided by residues 170 to 172, 237 to 238, aspartate 246, 252 to 253, alanine 269, and lysine 273; these read DSK, RF, and RK. Aspartate 246 serves as a coordination point for L-methionine. Lysine 277 is an L-methionine binding site.

This sequence belongs to the AdoMet synthase family. In terms of assembly, homotetramer; dimer of dimers. Requires Mg(2+) as cofactor. K(+) serves as cofactor.

The protein resides in the cytoplasm. It carries out the reaction L-methionine + ATP + H2O = S-adenosyl-L-methionine + phosphate + diphosphate. Its pathway is amino-acid biosynthesis; S-adenosyl-L-methionine biosynthesis; S-adenosyl-L-methionine from L-methionine: step 1/1. Catalyzes the formation of S-adenosylmethionine (AdoMet) from methionine and ATP. The overall synthetic reaction is composed of two sequential steps, AdoMet formation and the subsequent tripolyphosphate hydrolysis which occurs prior to release of AdoMet from the enzyme. The protein is S-adenosylmethionine synthase of Treponema denticola (strain ATCC 35405 / DSM 14222 / CIP 103919 / JCM 8153 / KCTC 15104).